Here is a 96-residue protein sequence, read N- to C-terminus: Large ribosomal subunit protein bL28 (96 aa).

This sequence belongs to the bacterial ribosomal protein bL28 family.

This is Large ribosomal subunit protein bL28 from Agrobacterium fabrum (strain C58 / ATCC 33970) (Agrobacterium tumefaciens (strain C58)).